The primary structure comprises 166 residues: NAD(P)H-quinone oxidoreductase subunit I, chloroplastic (166 aa).

2 consecutive 4Fe-4S ferredoxin-type domains span residues 55–84 (GRIHFEFDKCIACEVCVRVCPIDLPVVDWK) and 95–124 (LNYSIDFGICIFCGNCVEYCPTNCLSMTEE). Cysteine 64, cysteine 67, cysteine 70, cysteine 74, cysteine 104, cysteine 107, cysteine 110, and cysteine 114 together coordinate [4Fe-4S] cluster.

Belongs to the complex I 23 kDa subunit family. As to quaternary structure, NDH is composed of at least 16 different subunits, 5 of which are encoded in the nucleus. [4Fe-4S] cluster serves as cofactor.

Its subcellular location is the plastid. The protein resides in the chloroplast thylakoid membrane. The enzyme catalyses a plastoquinone + NADH + (n+1) H(+)(in) = a plastoquinol + NAD(+) + n H(+)(out). It carries out the reaction a plastoquinone + NADPH + (n+1) H(+)(in) = a plastoquinol + NADP(+) + n H(+)(out). Functionally, NDH shuttles electrons from NAD(P)H:plastoquinone, via FMN and iron-sulfur (Fe-S) centers, to quinones in the photosynthetic chain and possibly in a chloroplast respiratory chain. The immediate electron acceptor for the enzyme in this species is believed to be plastoquinone. Couples the redox reaction to proton translocation, and thus conserves the redox energy in a proton gradient. The polypeptide is NAD(P)H-quinone oxidoreductase subunit I, chloroplastic (Marshallia caespitosa (Barbara's buttons)).